Consider the following 276-residue polypeptide: Dermonecrotic toxin Ls4SicTox-alphaIII1i (276 aa).

His3 is a catalytic residue. Mg(2+) is bound by residues Glu23 and Asp25. The Nucleophile role is filled by His38. An intrachain disulfide couples Cys42 to Cys48. Asp82 is a Mg(2+) binding site.

This sequence belongs to the arthropod phospholipase D family. Class I subfamily. Requires Mg(2+) as cofactor. Expressed by the venom gland.

It is found in the secreted. The enzyme catalyses an N-(acyl)-sphingosylphosphocholine = an N-(acyl)-sphingosyl-1,3-cyclic phosphate + choline. The catalysed reaction is an N-(acyl)-sphingosylphosphoethanolamine = an N-(acyl)-sphingosyl-1,3-cyclic phosphate + ethanolamine. It carries out the reaction a 1-acyl-sn-glycero-3-phosphocholine = a 1-acyl-sn-glycero-2,3-cyclic phosphate + choline. It catalyses the reaction a 1-acyl-sn-glycero-3-phosphoethanolamine = a 1-acyl-sn-glycero-2,3-cyclic phosphate + ethanolamine. Functionally, dermonecrotic toxins cleave the phosphodiester linkage between the phosphate and headgroup of certain phospholipids (sphingolipid and lysolipid substrates), forming an alcohol (often choline) and a cyclic phosphate. This toxin acts on sphingomyelin (SM). It may also act on ceramide phosphoethanolamine (CPE), lysophosphatidylcholine (LPC) and lysophosphatidylethanolamine (LPE), but not on lysophosphatidylserine (LPS), and lysophosphatidylglycerol (LPG). It acts by transphosphatidylation, releasing exclusively cyclic phosphate products as second products. Induces dermonecrosis, hemolysis, increased vascular permeability, edema, inflammatory response, and platelet aggregation. This Loxosceles sp. (strain 4 GJB-2008) (Recluse spider) protein is Dermonecrotic toxin Ls4SicTox-alphaIII1i.